Here is a 970-residue protein sequence, read N- to C-terminus: m7GpppN-mRNA hydrolase (970 aa).

One can recognise a Nudix hydrolase domain in the interval 101–228 (KSIPVRGAAI…IKYYLINSMM (128 aa)). Serine 116 is modified (phosphoserine). The short motif at 134 to 155 (GKISKDENDIDCCIREVKEEIG) is the Nudix box element. Residues glutamate 149 and glutamate 153 each contribute to the Mn(2+) site. Basic and acidic residues predominate over residues 302 to 314 (QHLKEQSGEHNQQ). 4 disordered regions span residues 302–341 (QHLK…ANNK), 417–465 (AVSQ…PKLK), 501–520 (SSQK…NDSV), and 528–692 (YEDF…LSST). The span at 315 to 334 (KDQQSSFSSQQQPSIFPSLS) shows a compositional bias: low complexity. Serine 439 is subject to Phosphoserine. Positions 528 to 539 (YEDFESSSDEEV) are enriched in acidic residues. The segment covering 560-576 (SEKDSRRSQKEKPRNDA) has biased composition (basic and acidic residues). The span at 577-590 (SKTNLNASAESNSV) shows a compositional bias: polar residues. Positions 596–608 (KSSPSTQSKQNSS) are enriched in low complexity. Residues 625-637 (DAYEVFESSSDEE) show a composition bias toward acidic residues. Threonine 677 carries the post-translational modification Phosphothreonine. Residues 677-691 (TESNKSINETVGLSS) are compositionally biased toward polar residues. Phosphoserine occurs at positions 679, 682, 751, 771, 773, and 778. The interval 831–867 (LKKNDSTGYPRTEGGPSSEMSTSMKRNDATNNQELDK) is disordered. Polar residues predominate over residues 848–863 (SEMSTSMKRNDATNNQ).

This sequence belongs to the Nudix hydrolase family. DCP2 subfamily. Component of the decapping complex composed of DCP1 and DCP2. Interacts with mRNA, LSM2, LSM4 and LSM8. Interacts with EDC3. Requires Mn(2+) as cofactor.

The protein resides in the cytoplasm. The protein localises to the P-body. It catalyses the reaction a 5'-end (N(7)-methyl 5'-triphosphoguanosine)-ribonucleoside in mRNA + H2O = N(7)-methyl-GDP + a 5'-end phospho-ribonucleoside in mRNA + 2 H(+). Its function is as follows. Catalytic component of the decapping complex necessary for the degradation of mRNAs, both in normal mRNA turnover and in nonsense-mediated mRNA decay. Removes the 7-methyl guanine cap structure from mRNA molecules, yielding a 5'-phosphorylated mRNA fragment and 7m-GDP. Decapping is the major pathway of mRNA degradation in yeast and occurs through deadenylation, decapping and subsequent 5' to 3' exonucleolytic decay of the transcript body. Blocks autophagy in nutrient-rich conditions by repressing the expression of ATG-related genes through degradation of their transcripts. The chain is m7GpppN-mRNA hydrolase from Saccharomyces cerevisiae (strain ATCC 204508 / S288c) (Baker's yeast).